We begin with the raw amino-acid sequence, 308 residues long: UPF0282 protein YG5714_2245 (308 aa).

It belongs to the UPF0282 family.

The chain is UPF0282 protein YG5714_2245 from Saccharolobus islandicus (strain Y.G.57.14 / Yellowstone #1) (Sulfolobus islandicus).